Here is a 20-residue protein sequence, read N- to C-terminus: L-amino-acid oxidase L1 (20 aa).

This sequence belongs to the flavin monoamine oxidase family. FIG1 subfamily. In terms of assembly, monomer. This is in contrast with most of its orthologs, that are non-covalently linked homodimers. FAD is required as a cofactor. In terms of processing, N-glycosylated. As to expression, expressed by the venom gland.

It is found in the secreted. It catalyses the reaction an L-alpha-amino acid + O2 + H2O = a 2-oxocarboxylate + H2O2 + NH4(+). The enzyme catalyses L-leucine + O2 + H2O = 4-methyl-2-oxopentanoate + H2O2 + NH4(+). The catalysed reaction is L-phenylalanine + O2 + H2O = 3-phenylpyruvate + H2O2 + NH4(+). It carries out the reaction L-tryptophan + O2 + H2O = indole-3-pyruvate + H2O2 + NH4(+). It catalyses the reaction L-methionine + O2 + H2O = 4-methylsulfanyl-2-oxobutanoate + H2O2 + NH4(+). The enzyme catalyses L-isoleucine + O2 + H2O = (S)-3-methyl-2-oxopentanoate + H2O2 + NH4(+). The catalysed reaction is L-tyrosine + O2 + H2O = 3-(4-hydroxyphenyl)pyruvate + H2O2 + NH4(+). Catalyzes an oxidative deamination of predominantly hydrophobic and aromatic L-amino acids, thus producing hydrogen peroxide that may contribute to the diverse toxic effects of this enzyme. Is active on L-Met, L-Ile, L-Leu, L-Phe, L-Trp, and L-Tyr. Exhibits diverse biological activities, such as hemorrhage, hemolysis, edema, apoptosis of vascular endothelial cells or tumor cell lines, antibacterial and antiparasitic activities, as well as regulation of platelet aggregation. Its effect on platelets is controversial, since it either induces aggregation or inhibits agonist-induced aggregation. These different effects are probably due to different experimental conditions. The protein is L-amino-acid oxidase L1 of Daboia russelii (Russel's viper).